Consider the following 291-residue polypeptide: Polyamine aminopropyltransferase (291 aa).

The region spanning 5-245 is the PABS domain; it reads PGPISLIEPL…YAVNYILGSL (241 aa). Residue Gln36 coordinates S-methyl-5'-thioadenosine. 2 residues coordinate spermidine: His67 and Glu91. S-methyl-5'-thioadenosine contacts are provided by residues Asp111 and 143 to 144; that span reads DG. Asp164 functions as the Proton acceptor in the catalytic mechanism.

This sequence belongs to the spermidine/spermine synthase family. Homodimer or homotetramer.

The protein resides in the cytoplasm. It catalyses the reaction S-adenosyl 3-(methylsulfanyl)propylamine + putrescine = S-methyl-5'-thioadenosine + spermidine + H(+). It participates in amine and polyamine biosynthesis; spermidine biosynthesis; spermidine from putrescine: step 1/1. Its function is as follows. Catalyzes the irreversible transfer of a propylamine group from the amino donor S-adenosylmethioninamine (decarboxy-AdoMet) to putrescine (1,4-diaminobutane) to yield spermidine. The protein is Polyamine aminopropyltransferase of Pyrobaculum neutrophilum (strain DSM 2338 / JCM 9278 / NBRC 100436 / V24Sta) (Thermoproteus neutrophilus).